The sequence spans 1255 residues: DNA-directed RNA polymerase subunit beta' (1255 aa).

Zn(2+) contacts are provided by cysteine 60, cysteine 62, cysteine 77, and cysteine 80. Aspartate 503, aspartate 505, and aspartate 507 together coordinate Mg(2+). 4 residues coordinate Zn(2+): cysteine 875, cysteine 950, cysteine 957, and cysteine 960.

The protein belongs to the RNA polymerase beta' chain family. The RNAP catalytic core consists of 2 alpha, 1 beta, 1 beta' and 1 omega subunit. When a sigma factor is associated with the core the holoenzyme is formed, which can initiate transcription. The cofactor is Mg(2+). Requires Zn(2+) as cofactor.

The enzyme catalyses RNA(n) + a ribonucleoside 5'-triphosphate = RNA(n+1) + diphosphate. Functionally, DNA-dependent RNA polymerase catalyzes the transcription of DNA into RNA using the four ribonucleoside triphosphates as substrates. The chain is DNA-directed RNA polymerase subunit beta' from Mycoplasma mycoides subsp. mycoides SC (strain CCUG 32753 / NCTC 10114 / PG1).